The primary structure comprises 209 residues: Uridine kinase (209 aa).

12-19 provides a ligand contact to ATP; it reads GGSASGKT.

Belongs to the uridine kinase family.

It is found in the cytoplasm. The enzyme catalyses uridine + ATP = UMP + ADP + H(+). It catalyses the reaction cytidine + ATP = CMP + ADP + H(+). The protein operates within pyrimidine metabolism; CTP biosynthesis via salvage pathway; CTP from cytidine: step 1/3. Its pathway is pyrimidine metabolism; UMP biosynthesis via salvage pathway; UMP from uridine: step 1/1. This chain is Uridine kinase, found in Chloroflexus aggregans (strain MD-66 / DSM 9485).